The chain runs to 167 residues: uncharacterized protein (167 aa).

The protein localises to the mitochondrion. This is an uncharacterized protein from Ascobolus immersus.